The primary structure comprises 182 residues: Peptidoglycan-recognition protein SB2 (182 aa).

The N-terminal stretch at 1-17 (MKLQLALVLCGLTLALG) is a signal peptide. The N-acetylmuramoyl-L-alanine amidase domain occupies 40 to 165 (PVRLIIIHHT…CQTKATACPG (126 aa)). Histidine 47 contacts Zn(2+). A disulfide bridge connects residues cysteine 54 and cysteine 60. N-linked (GlcNAc...) asparagine glycosylation occurs at asparagine 149. Positions 155 and 163 each coordinate Zn(2+).

The protein belongs to the N-acetylmuramoyl-L-alanine amidase 2 family. Zn(2+) serves as cofactor.

It is found in the secreted. The enzyme catalyses Hydrolyzes the link between N-acetylmuramoyl residues and L-amino acid residues in certain cell-wall glycopeptides.. Its function is as follows. N-acetylmuramyl-L-alanine amidase involved in innate immunity by degrading bacterial peptidoglycans (PGN). Probably plays a scavenger role by digesting biologically active PGN into biologically inactive fragments. Has no direct bacteriolytic activity. This Drosophila melanogaster (Fruit fly) protein is Peptidoglycan-recognition protein SB2 (PGRP-SB2).